The following is a 338-amino-acid chain: Solute carrier family 35 member B1 homolog (338 aa).

Transmembrane regions (helical) follow at residues 9–29 (FVIYAVGIFVCYFLYGIVQEK), 53–73 (LALVWVQCLCNYVFAKVLLTI), 84–104 (GSYVACSLTYLLAMVSTNMAM), 111–131 (TAVVGKSAKPIPVMILGVLIG), 135–155 (YSWTRYACVLTIVLGVILFMY), 168–188 (TLLGEVLLFLSLSMDGLTGAV), 213–233 (LMLGVAMVFTGEAKEFMYFTI), 244–264 (LIAVCGVLGQFFIFLMVASFG), and 284–304 (VLLFGNVLIARQWLGAVLVFA). The Di-lysine motif signature appears at 334 to 338 (KKLNS).

The protein belongs to the nucleotide-sugar transporter family. SLC35B subfamily.

It localises to the endoplasmic reticulum membrane. Functionally, probable sugar transporter. The polypeptide is Solute carrier family 35 member B1 homolog (meigo) (Drosophila melanogaster (Fruit fly)).